We begin with the raw amino-acid sequence, 246 residues long: Sugar fermentation stimulation protein homolog (246 aa).

This sequence belongs to the SfsA family.

The chain is Sugar fermentation stimulation protein homolog from Prochlorococcus marinus (strain MIT 9215).